Reading from the N-terminus, the 469-residue chain is Pup--protein ligase (469 aa).

A Mg(2+)-binding site is contributed by E9. R53 contacts ATP. Y55 serves as a coordination point for Mg(2+). The active-site Proton acceptor is the D57. E63 contributes to the Mg(2+) binding site. The ATP site is built by T66 and W430.

This sequence belongs to the Pup ligase/Pup deamidase family. Pup-conjugating enzyme subfamily.

The enzyme catalyses ATP + [prokaryotic ubiquitin-like protein]-L-glutamate + [protein]-L-lysine = ADP + phosphate + N(6)-([prokaryotic ubiquitin-like protein]-gamma-L-glutamyl)-[protein]-L-lysine.. It participates in protein degradation; proteasomal Pup-dependent pathway. It functions in the pathway protein modification; protein pupylation. Catalyzes the covalent attachment of the prokaryotic ubiquitin-like protein modifier Pup to the proteasomal substrate proteins, thereby targeting them for proteasomal degradation. This tagging system is termed pupylation. The ligation reaction involves the side-chain carboxylate of the C-terminal glutamate of Pup and the side-chain amino group of a substrate lysine. This is Pup--protein ligase from Kocuria rhizophila (strain ATCC 9341 / DSM 348 / NBRC 103217 / DC2201).